The primary structure comprises 98 residues: uncharacterized protein (98 aa).

This is an uncharacterized protein from Acidianus two-tailed virus (ATV).